A 49-amino-acid chain; its full sequence is Large ribosomal subunit protein bL33 (49 aa).

This sequence belongs to the bacterial ribosomal protein bL33 family.

The chain is Large ribosomal subunit protein bL33 from Clostridium acetobutylicum (strain ATCC 824 / DSM 792 / JCM 1419 / IAM 19013 / LMG 5710 / NBRC 13948 / NRRL B-527 / VKM B-1787 / 2291 / W).